The chain runs to 523 residues: 2-isopropylmalate synthase (523 aa).

The Pyruvate carboxyltransferase domain occupies 5–267; it reads VIIFDTTLRD…HTAINHQEIW (263 aa). The Mn(2+) site is built by Asp14, His202, His204, and Asn238. A regulatory domain region spans residues 392-523; that stretch reads RLDYFSVQSG…QHNENNKETV (132 aa).

This sequence belongs to the alpha-IPM synthase/homocitrate synthase family. LeuA type 1 subfamily. In terms of assembly, homodimer. It depends on Mn(2+) as a cofactor.

The protein localises to the cytoplasm. It catalyses the reaction 3-methyl-2-oxobutanoate + acetyl-CoA + H2O = (2S)-2-isopropylmalate + CoA + H(+). Its pathway is amino-acid biosynthesis; L-leucine biosynthesis; L-leucine from 3-methyl-2-oxobutanoate: step 1/4. Catalyzes the condensation of the acetyl group of acetyl-CoA with 3-methyl-2-oxobutanoate (2-ketoisovalerate) to form 3-carboxy-3-hydroxy-4-methylpentanoate (2-isopropylmalate). The polypeptide is 2-isopropylmalate synthase (Escherichia coli (strain SMS-3-5 / SECEC)).